We begin with the raw amino-acid sequence, 519 residues long: MAGTPNFDRRSFLRLAAAAGLTGMAGVTSATPGRSPGPKKDEILVGVTSTADSPRKAVADAVPGNAEIVHENETLSYAAVKFPSKAPKQARENFISAITKRDEVKYAEKNATHEALYTANDPKYGSQYAPQQVNADSAWDTTLGSSSVKIAVVDQGVKYDHPDLSSQFGSNKGRDFVDNDGDPYPDLLSDEYHGTHVAGIAAGTTDNNEGIGGISNSTLLSGRALSESGSGSTSDIADAIEWAADQGADVINLSLGGGGYSSTMKNAVSYATQQGSLVVAAAGNDGRQSVSYPAAYSECVAVSALDPDETLASYSNYGSEIDLAAPGTNVLSCWTTSTEYNEISGTSMATPVVSGVAGLALAVHNLSPADLRNHLKNTAVDIGLSSTKQGSGRVDAANAVTTDPGDGGGGGGGGSKETTYDGTLSSSSDSNCVSHSWNYSSPSQVVIDLSGPSSADFDLYATEGSGTCPTTRSYDYRSWSYDSTEQIVIDNPDTSADLGILVDSYSGSGSYTVTITEKE.

Positions 1-27 (MAGTPNFDRRSFLRLAAAAGLTGMAGV) form a signal peptide, tat-type signal. Residues 28-116 (TSATPGRSPG…AEKNATHEAL (89 aa)) constitute a propeptide that is removed on maturation. Residues 127–400 (QYAPQQVNAD…SGRVDAANAV (274 aa)) enclose the Peptidase S8 domain. Active-site charge relay system residues include Asp-154, His-193, and Ser-347. A disordered region spans residues 386–425 (STKQGSGRVDAANAVTTDPGDGGGGGGGGSKETTYDGTLS). Residues 405 to 415 (GDGGGGGGGGS) show a composition bias toward gly residues.

It belongs to the peptidase S8 family. In terms of processing, predicted to be exported by the Tat system. The position of the signal peptide cleavage has not been experimentally proven.

Its subcellular location is the secreted. Its function is as follows. Probable secreted halophilic serine protease showing proteolytic activity toward the protease general substrate azocasein. The sequence is that of Halolysin (hly) from Haloferax mediterranei (strain ATCC 33500 / DSM 1411 / JCM 8866 / NBRC 14739 / NCIMB 2177 / R-4) (Halobacterium mediterranei).